Consider the following 68-residue polypeptide: Riparin-1.5 amide (68 aa).

Positions methionine 1–alanine 15 are cleaved as a signal peptide. Residues glutamine 16 to arginine 41 constitute a propeptide that is removed on maturation. A disulfide bond links cysteine 47 and cysteine 53. Cysteine 53 carries the post-translational modification Cysteine amide. A propeptide spanning residues serine 57–glutamate 68 is cleaved from the precursor.

In terms of tissue distribution, expressed by the skin glands.

The protein resides in the secreted. This chain is Riparin-1.5 amide, found in Crinia riparia (Streambank froglet).